The following is a 437-amino-acid chain: Magnetosome protein MamN (437 aa).

Transmembrane regions (helical) follow at residues 26–46 (LAVLAGAAVLVVIGTISGTYT), 53–73 (SIYFETLALIFGMAAISALLA), 95–115 (WILVMMALVTYGISLASNSLI), 136–156 (VPVIIAEIIAANLGGSSTMIG), 174–194 (FIGGMMPACLILLAVTFLFFE), 229–249 (YGLIIFFITVIGLVLAGPLKV), 252–268 (GWIAFVAGLTALALGRF), 281–301 (DILFFGGLFVMVGALTSVGIL), 320–340 (AILLMWMAAGVTIFVGGGTSA), 358–378 (AAWWALALGIMAGSCAALSGA), and 416–436 (WGLPLMGIFLVLSTVYIAVLA).

It belongs to the arsenite-antimonite (ArsB) efflux (TC 2.A.45) family.

It localises to the magnetosome membrane. In terms of biological role, plays a role in biomineralization; might regulate pH in the magnetosome. The polypeptide is Magnetosome protein MamN (Magnetospirillum gryphiswaldense (strain DSM 6361 / JCM 21280 / NBRC 15271 / MSR-1)).